The chain runs to 74 residues: MKFLEKLTSKKGQIAMELGILVMAAVAVAAIAAYFYATNVSNTGKQITNSTNQTTQALADAISDATSQMSNITD.

A propeptide spanning residues 1–12 is cleaved from the precursor; that stretch reads MKFLEKLTSKKG. A Pyrrolidone carboxylic acid modification is found at Gln-13. A QXSXEXXXL motif is present at residues 13–21; it reads QIAMELGIL.

Post-translationally, the N-terminus is cleaved by the prepilin peptidase EppA, which recognizes the class III signal sequence. In terms of processing, N-glycosylated. Glycosylated with an N-linked branched pentasaccharide glycan. May contain glycans at three sites. Glycosylation is AglB-dependent. The N-glycosylation does not occur unless the signal peptide has been cleaved first.

It localises to the secreted. It is found in the cell surface. The protein resides in the fimbrium. Major component of the type IV-like pili. The sequence is that of Major structural pilin EpdE from Methanococcus maripaludis (strain DSM 14266 / JCM 13030 / NBRC 101832 / S2 / LL).